The chain runs to 197 residues: Ribonuclease HII (197 aa).

One can recognise an RNase H type-2 domain in the interval 3-192 (QLIAGVDEVG…VQLSLMQRGG (190 aa)). Asp-9, Glu-10, and Asp-101 together coordinate a divalent metal cation.

This sequence belongs to the RNase HII family. The cofactor is Mn(2+). Mg(2+) is required as a cofactor.

It is found in the cytoplasm. The enzyme catalyses Endonucleolytic cleavage to 5'-phosphomonoester.. Endonuclease that specifically degrades the RNA of RNA-DNA hybrids. The chain is Ribonuclease HII from Pseudoalteromonas atlantica (strain T6c / ATCC BAA-1087).